Reading from the N-terminus, the 326-residue chain is Target of rapamycin complex subunit LST8 (326 aa).

The residue at position 1 (Met1) is an N-acetylmethionine. 5 WD repeats span residues 1–37 (MNTTPGTVGSDPVILATAGYDHTVRFWQAHSGICTRT), 40–80 (HQDS…PIIS), 83–122 (GVSKNIASVGFHEDGRWMYTGGEDCTARIWDLRSRNLQCQ), 126–165 (QVNAPINCVCLHPNQAELIVGDQSGAIHIWDLKTDHNEQL), and 168–207 (EPESSITSAHIDPDASYMAAVNSAGNCYVWNLTGGIGDDV). Thr51 is subject to Phosphothreonine. Lys86 is covalently cross-linked (Glycyl lysine isopeptide (Lys-Gly) (interchain with G-Cter in SUMO3)). Residues Lys215, Lys245, and Lys261 each participate in a glycyl lysine isopeptide (Lys-Gly) (interchain with G-Cter in SUMO3) cross-link. A WD 6 repeat occupies 218–257 (AHTRYALQCRFSPDSTLLATCSADQTCKIWRTSNFSLMTE). One copy of the WD 7 repeat lies at 268 to 309 (SSRGWMWGCAFSGDSQYIVTASSDNLARLWCVETGEIKREYG). Residue Lys305 forms a Glycyl lysine isopeptide (Lys-Gly) (interchain with G-Cter in SUMO3); alternate linkage. Glycyl lysine isopeptide (Lys-Gly) (interchain with G-Cter in ubiquitin); alternate cross-links involve residues Lys305 and Lys313. Lys313 participates in a covalent cross-link: Glycyl lysine isopeptide (Lys-Gly) (interchain with G-Cter in SUMO1); alternate.

This sequence belongs to the WD repeat LST8 family. Part of the mechanistic target of rapamycin complex 1 (mTORC1) which contains MTOR, MLST8 and RPTOR. mTORC1 associates with AKT1S1/PRAS40, which inhibits its activity. mTORC1 binds to and is inhibited by FKBP12-rapamycin. Within mTORC1, interacts directly with MTOR and RPTOR. Component of the mechanistic target of rapamycin complex 2 (mTORC2), consisting in two heterotretramers composed of MTOR, MLST8, RICTOR and MAPKAP1/SIN1. Contrary to mTORC1, mTORC2 does not bind to and is not sensitive to FKBP12-rapamycin. mTORC1 and mTORC2 associate with DEPTOR, which regulates their activity. Interacts with RHEB. Interacts with MEAK7. Interacts with SIK3. Interacts with SLC38A7; this interaction promotes the recruitment of mTORC1 to the lysosome and its subsequent activation. Post-translationally, phosphorylation at Thr-51 by CDK1 promotes ubiquitination by the SCF(FBXW7) complex, followed by degradation. In terms of processing, ubiquitination by the SCF(FBXW7) and SCF(FBXW11) complexes following phosphorylation at Thr-51 by CDK1, leads to its degradation by the proteasome. Ubiquitination at Lys-305 and Lys-313 by TRAF2 via 'Lys-63'-linked polyubiquitin chains inhibits formation of the mTORC2 complex, while promoting formation of the mTORC1 complex: ubiquitination disrupts the interaction between MLST8 and MAPKAP1/SIN1 to favor mTORC1 assembly. Deubiquitination at Lys-305 and Lys-313 by OTUD7B promotes MLST8 interaction with MAPKAP1/SIN1, facilitating mTORC2 assembly. Sumoylation with SUMO1, SUMO2 and SUMO3 promotes assembly of both mTORC1 and mTORC2 complexes.

The protein localises to the lysosome membrane. It is found in the cytoplasm. Functionally, subunit of both mTORC1 and mTORC2, which regulates cell growth and survival in response to nutrient and hormonal signals. mTORC1 is activated in response to growth factors or amino acids. In response to nutrients, mTORC1 is recruited to the lysosome membrane and promotes protein, lipid and nucleotide synthesis by phosphorylating several substrates, such as ribosomal protein S6 kinase (RPS6KB1 and RPS6KB2) and EIF4EBP1 (4E-BP1). In the same time, it inhibits catabolic pathways by phosphorylating the autophagy initiation components ULK1 and ATG13, as well as transcription factor TFEB, a master regulators of lysosomal biogenesis and autophagy. The mTORC1 complex is inhibited in response to starvation and amino acid depletion. Within mTORC1, MLST8 interacts directly with MTOR and enhances its kinase activity. In nutrient-poor conditions, stabilizes the MTOR-RPTOR interaction and favors RPTOR-mediated inhibition of MTOR activity. As part of the mTORC2 complex, transduces signals from growth factors to pathways involved in proliferation, cytoskeletal organization, lipogenesis and anabolic output. mTORC2 is also activated by growth factors, but seems to be nutrient-insensitive. In response to growth factors, mTORC2 phosphorylates and activates AGC protein kinase family members, including AKT (AKT1, AKT2 and AKT3), PKC (PRKCA, PRKCB and PRKCE) and SGK1. mTORC2 functions upstream of Rho GTPases to regulate the actin cytoskeleton, probably by activating one or more Rho-type guanine nucleotide exchange factors. mTORC2 promotes the serum-induced formation of stress-fibers or F-actin. mTORC2 plays a critical role in AKT1 activation by mediating phosphorylation of different sites depending on the context, such as 'Thr-450', 'Ser-473', 'Ser-477' or 'Thr-479', facilitating the phosphorylation of the activation loop of AKT1 on 'Thr-308' by PDPK1/PDK1 which is a prerequisite for full activation. mTORC2 regulates the phosphorylation of SGK1 at 'Ser-422'. mTORC2 also modulates the phosphorylation of PRKCA on 'Ser-657'. Within mTORC2, MLST8 acts as a bridge between MAPKAP1/SIN1 and MTOR. The sequence is that of Target of rapamycin complex subunit LST8 from Mus musculus (Mouse).